The primary structure comprises 174 residues: Gamma-crystallin M3 (174 aa).

2 Beta/gamma crystallin 'Greek key' domains span residues G2 to S40 and G41 to P82. The connecting peptide stretch occupies residues Q83–P87. Beta/gamma crystallin 'Greek key' domains are found at residues Y88–D128 and G129–M171.

The protein belongs to the beta/gamma-crystallin family. As to quaternary structure, monomer.

In terms of biological role, crystallins are the dominant structural components of the vertebrate eye lens. In Cyprinus carpio (Common carp), this protein is Gamma-crystallin M3.